The following is a 177-amino-acid chain: MQNACTLNKKSSYSYDDLLASGRGELFGKEGPQLPAPTMLMMDRIIEMNEETGAFGKGYIEAELDIKPELPFFGCHFIGDPVMPGCLGLDAMWQLVGFYLGWIGGKGKGRALGVGEVKFTGQILPTAKKVVYRIHMKRVINRKLVMGMADGEVEVDGRVIYTATDLKVGLFQDTSTF.

The active site involves His-76.

This sequence belongs to the thioester dehydratase family. FabA subfamily. In terms of assembly, homodimer.

It localises to the cytoplasm. The enzyme catalyses a (3R)-hydroxyacyl-[ACP] = a (2E)-enoyl-[ACP] + H2O. The catalysed reaction is (3R)-hydroxydecanoyl-[ACP] = (2E)-decenoyl-[ACP] + H2O. It catalyses the reaction (2E)-decenoyl-[ACP] = (3Z)-decenoyl-[ACP]. It participates in lipid metabolism; fatty acid biosynthesis. In terms of biological role, necessary for the introduction of cis unsaturation into fatty acids. Catalyzes the dehydration of (3R)-3-hydroxydecanoyl-ACP to E-(2)-decenoyl-ACP and then its isomerization to Z-(3)-decenoyl-ACP. Can catalyze the dehydratase reaction for beta-hydroxyacyl-ACPs with saturated chain lengths up to 16:0, being most active on intermediate chain length. This Haemophilus influenzae (strain PittGG) protein is 3-hydroxydecanoyl-[acyl-carrier-protein] dehydratase.